The chain runs to 218 residues: Grancalcin (218 aa).

EF-hand domains lie at 49 to 84 (SSAG…SGIS), 85 to 119 (GTYS…KELW), 120 to 155 (SALN…MGYR), and 156 to 191 (LSPQ…ALTD). 9 residues coordinate Ca(2+): D103, D105, T107, K109, D133, D135, S137, T139, and E144.

Homodimer. Interacts with SRI and LCP1.

It is found in the cytoplasm. Its subcellular location is the cytoplasmic granule membrane. In terms of biological role, calcium-binding protein that may play a role in the adhesion of neutrophils to fibronectin. May play a role in the formation of focal adhesions. In Pongo abelii (Sumatran orangutan), this protein is Grancalcin (GCA).